The chain runs to 182 residues: Ribosome maturation factor RimM (182 aa).

Residues 102–182 (GEGDYYWKDL…TIEVDWDPGF (81 aa)) form the PRC barrel domain.

This sequence belongs to the RimM family. In terms of assembly, binds ribosomal protein uS19.

The protein localises to the cytoplasm. An accessory protein needed during the final step in the assembly of 30S ribosomal subunit, possibly for assembly of the head region. Essential for efficient processing of 16S rRNA. May be needed both before and after RbfA during the maturation of 16S rRNA. It has affinity for free ribosomal 30S subunits but not for 70S ribosomes. This Pectobacterium carotovorum subsp. carotovorum (strain PC1) protein is Ribosome maturation factor RimM.